A 93-amino-acid chain; its full sequence is Small ribosomal subunit protein uS17 (93 aa).

This sequence belongs to the universal ribosomal protein uS17 family. Part of the 30S ribosomal subunit.

Functionally, one of the primary rRNA binding proteins, it binds specifically to the 5'-end of 16S ribosomal RNA. This Corynebacterium aurimucosum (strain ATCC 700975 / DSM 44827 / CIP 107346 / CN-1) (Corynebacterium nigricans) protein is Small ribosomal subunit protein uS17.